The sequence spans 296 residues: Putative gluconeogenesis factor (296 aa).

Belongs to the gluconeogenesis factor family.

It is found in the cytoplasm. Functionally, required for morphogenesis under gluconeogenic growth conditions. In Vibrio cholerae serotype O1 (strain ATCC 39315 / El Tor Inaba N16961), this protein is Putative gluconeogenesis factor.